A 591-amino-acid polypeptide reads, in one-letter code: Aspartate--tRNA(Asp/Asn) ligase (591 aa).

Glu174 is an L-aspartate binding site. Residues 198 to 201 (QLFK) form an aspartate region. Arg220 provides a ligand contact to L-aspartate. ATP-binding positions include 220–222 (RDE) and Gln229. His450 contacts L-aspartate. Residue Glu483 coordinates ATP. Arg490 lines the L-aspartate pocket. 535-538 (GLDR) contributes to the ATP binding site.

Belongs to the class-II aminoacyl-tRNA synthetase family. Type 1 subfamily. As to quaternary structure, homodimer.

The protein resides in the cytoplasm. The enzyme catalyses tRNA(Asx) + L-aspartate + ATP = L-aspartyl-tRNA(Asx) + AMP + diphosphate. In terms of biological role, aspartyl-tRNA synthetase with relaxed tRNA specificity since it is able to aspartylate not only its cognate tRNA(Asp) but also tRNA(Asn). Reaction proceeds in two steps: L-aspartate is first activated by ATP to form Asp-AMP and then transferred to the acceptor end of tRNA(Asp/Asn). The protein is Aspartate--tRNA(Asp/Asn) ligase of Pseudomonas syringae pv. syringae (strain B728a).